Here is a 749-residue protein sequence, read N- to C-terminus: Chaperone protein dnaK3 (749 aa).

Phosphothreonine; by autocatalysis is present on Thr198. 3 stretches are compositionally biased toward basic and acidic residues: residues 643–653 (RWDADPWDRSR), 661–694 (YDDRRSPVSDPYRGERWVEEQTSMSRREPVRDRN), and 711–724 (PTWEEDQPPRRDRS). The disordered stretch occupies residues 643-749 (RWDADPWDRS…GWDDDDDEWF (107 aa)). Residues 740–749 (GWDDDDDEWF) are compositionally biased toward acidic residues.

The protein belongs to the heat shock protein 70 family.

Functionally, acts as a chaperone. This chain is Chaperone protein dnaK3 (dnaK3), found in Synechococcus elongatus (strain ATCC 33912 / PCC 7942 / FACHB-805) (Anacystis nidulans R2).